A 329-amino-acid chain; its full sequence is Malate dehydrogenase (329 aa).

12–18 lines the NAD(+) pocket; it reads GAAGQIG. 2 residues coordinate substrate: Arg-95 and Arg-101. NAD(+) is bound by residues Asn-108, Gln-115, and 132 to 134; that span reads VGN. Residues Asn-134 and Arg-165 each contribute to the substrate site. Catalysis depends on His-190, which acts as the Proton acceptor.

The protein belongs to the LDH/MDH superfamily. MDH type 2 family.

It catalyses the reaction (S)-malate + NAD(+) = oxaloacetate + NADH + H(+). Catalyzes the reversible oxidation of malate to oxaloacetate. The sequence is that of Malate dehydrogenase from Ralstonia nicotianae (strain ATCC BAA-1114 / GMI1000) (Ralstonia solanacearum).